A 608-amino-acid chain; its full sequence is Probable potassium transport system protein Kup (608 aa).

12 consecutive transmembrane segments (helical) span residues 9–29 (LSGV…TSPL), 46–66 (PAAI…VVSV), 99–119 (TPVL…EVVI), 137–157 (PSLD…LFAI), 165–185 (VGKL…VLGL), 213–233 (TSFF…ALYA), 247–267 (WFVV…ALLL), 285–305 (ALLP…QAVI), 337–357 (IYIP…IMSF), 363–383 (LAAA…ILFC), 396–416 (LVAA…AANL), and 419–439 (IFSG…LMTS).

Belongs to the HAK/KUP transporter (TC 2.A.72) family.

It localises to the cell inner membrane. The enzyme catalyses K(+)(in) + H(+)(in) = K(+)(out) + H(+)(out). Its function is as follows. Transport of potassium into the cell. Likely operates as a K(+):H(+) symporter. This is Probable potassium transport system protein Kup from Aeromonas salmonicida (strain A449).